A 429-amino-acid chain; its full sequence is Enolase (429 aa).

A (2R)-2-phosphoglycerate-binding site is contributed by Gln-163. Residue Glu-205 is the Proton donor of the active site. Positions 242, 286, and 313 each coordinate Mg(2+). (2R)-2-phosphoglycerate is bound by residues Lys-338, Arg-367, Ser-368, and Lys-389. Catalysis depends on Lys-338, which acts as the Proton acceptor.

The protein belongs to the enolase family. It depends on Mg(2+) as a cofactor.

Its subcellular location is the cytoplasm. The protein localises to the secreted. It is found in the cell surface. It carries out the reaction (2R)-2-phosphoglycerate = phosphoenolpyruvate + H2O. It functions in the pathway carbohydrate degradation; glycolysis; pyruvate from D-glyceraldehyde 3-phosphate: step 4/5. Its function is as follows. Catalyzes the reversible conversion of 2-phosphoglycerate (2-PG) into phosphoenolpyruvate (PEP). It is essential for the degradation of carbohydrates via glycolysis. This Geotalea uraniireducens (strain Rf4) (Geobacter uraniireducens) protein is Enolase.